We begin with the raw amino-acid sequence, 185 residues long: Ribosome-recycling factor (185 aa).

This sequence belongs to the RRF family.

Its subcellular location is the cytoplasm. Functionally, responsible for the release of ribosomes from messenger RNA at the termination of protein biosynthesis. May increase the efficiency of translation by recycling ribosomes from one round of translation to another. This Geobacter sulfurreducens (strain ATCC 51573 / DSM 12127 / PCA) protein is Ribosome-recycling factor.